The following is a 147-amino-acid chain: Peptide methionine sulfoxide reductase MsrB 2 (147 aa).

Positions 6-129 constitute a MsrB domain; the sequence is TDEEVSKLTP…NSAALRFIPR (124 aa). The Nucleophile role is filled by Cys-118.

Belongs to the MsrB Met sulfoxide reductase family.

The enzyme catalyses L-methionyl-[protein] + [thioredoxin]-disulfide + H2O = L-methionyl-(R)-S-oxide-[protein] + [thioredoxin]-dithiol. The protein is Peptide methionine sulfoxide reductase MsrB 2 (msrB2) of Rhizobium meliloti (strain 1021) (Ensifer meliloti).